The sequence spans 362 residues: Peptide chain release factor 1 (362 aa).

The residue at position 235 (Gln235) is an N5-methylglutamine.

Belongs to the prokaryotic/mitochondrial release factor family. Post-translationally, methylated by PrmC. Methylation increases the termination efficiency of RF1.

It localises to the cytoplasm. Functionally, peptide chain release factor 1 directs the termination of translation in response to the peptide chain termination codons UAG and UAA. The protein is Peptide chain release factor 1 of Acinetobacter baylyi (strain ATCC 33305 / BD413 / ADP1).